Consider the following 62-residue polypeptide: Small ribosomal subunit protein bS21 (62 aa).

A disordered region spans residues 43-62 (EKRKRKAMALQKQRKRRSRY). A compositionally biased stretch (basic residues) spans 44-62 (KRKRKAMALQKQRKRRSRY).

This sequence belongs to the bacterial ribosomal protein bS21 family.

This chain is Small ribosomal subunit protein bS21, found in Trichodesmium erythraeum (strain IMS101).